Consider the following 1140-residue polypeptide: Envelopment polyprotein (1140 aa).

An N-terminal signal peptide occupies residues 1–17 (MVGWVCIFLVVLTTATA). At 18–480 (GLTRNLYELK…AHSLAVELCV (463 aa)) the chain is on the lumenal side. 6 cysteine pairs are disulfide-bonded: C30–C155, C64–C161, C113–C132, C137–C142, C179–C189, and C214–C251. Residue N138 is glycosylated (N-linked (GlcNAc...) asparagine; by host). N-linked (GlcNAc...) asparagine; by host glycosylation occurs at N351. Intrachain disulfides connect C380–C439, C384–C393, C409–C428, and C456–C479. N-linked (GlcNAc...) asparagine; by host glycosylation occurs at N403. Residues 490–510 (ALLITFCFGWLLIPAVTLIIL) traverse the membrane as a helical segment. At 511–631 (KILRLLTFSC…LGVFRYKSRC (121 aa)) the chain is on the cytoplasmic side. The tract at residues 520-537 (CSHYSTESKFKVILERVK) is binding to the ribonucleoprotein. CCHC-type zinc fingers lie at residues 549–569 (CDIC…KKSC) and 574–595 (CPYC…FAIC). Binding to the ribonucleoprotein regions lie at residues 592–609 (FAIC…KKSL), 596–607 (KLTNRFQENLKK), and 615–629 (RKGC…RYKS). Residues 615 to 638 (RKGCYRTLGVFRYKSRCYVGLVWG) enclose the ITAM domain. Residues Y619 and Y632 each carry the phosphotyrosine modification. A YxxL motif is present at residues 619–622 (YRTL). The chain crosses the membrane as a helical span at residues 632 to 652 (YVGLVWGILLTTELIIWAASA). Topologically, residues 653-1108 (DTPLMESGWS…EWLLGILNGN (456 aa)) are lumenal. Disulfide bonds link C739/C774, C743/C781, C755/C888, C769/C899, C784/C907, C810/C819, C827/C836, and C867/C871. The interval 761-781 (YQYETSWGCNPPDCPGVGTGC) is fusion loop. N-linked (GlcNAc...) asparagine; by host glycosylation is present at N931. 5 cysteine pairs are disulfide-bonded: C973–C1003, C996–C1048, C1013–C1018, C1049–C1054, and C1088–C1092. A helical membrane pass occupies residues 1109–1129 (WVVVAVLIVILILSILLFSFF). The tract at residues 1125 to 1140 (LFSFFCPVRSRKNKAN) is binding to the ribonucleoprotein. Residues 1130 to 1140 (CPVRSRKNKAN) are Cytoplasmic-facing.

The protein belongs to the hantavirus envelope glycoprotein family. In terms of assembly, homodimer. Homotetramer; forms heterotetrameric Gn-Gc spikes in the pre-fusion conformation. Interacts (via C-terminus) with the nucleoprotein. Interacts with host TUFM; this interaction contributes to the virus-induced degradation of mitochondria by autophagy, which leads to degradation of host MAVS and inhibition of type I interferon (IFN) responses. Interacts with host MAP1LC3B; this interaction contributes to the virus-induced degradation of mitochondria by autophagy, which leads to degradation of host MAVS and inhibition of type I interferon (IFN) responses. Homodimer. Homotetramer; forms heterotetrameric Gn-Gc spikes in the pre-fusion conformation. Homotrimer; forms homotrimer in the post-fusion conformation at acidic pH. Interacts (via C-terminus) with the nucleoprotein. Envelope polyprotein precursor is quickly cleaved in vivo just after synthesis, presumably by host signal peptidase.

It is found in the virion membrane. It localises to the host cell surface. Its subcellular location is the host Golgi apparatus membrane. The protein localises to the host endoplasmic reticulum membrane. The protein resides in the host mitochondrion. Its function is as follows. Forms homotetramers with glycoprotein C at the surface of the virion. Attaches the virion to host cell receptors including integrin ITGAV/ITGB3. This attachment induces virion internalization predominantly through clathrin-dependent endocytosis. Mediates the assembly and budding of infectious virus particles through its interaction with the nucleocapsid protein and the viral genome. May dysregulate normal immune and endothelial cell responses through an ITAM motif. Translocates to mitochondria, binds to host TUFM and recruits MAP1LC3B. These interactions induce mitochondrial autophagy and therefore destruction of host MAVS leading to inhibition of type I interferon (IFN) responses. Concomitant breakdown of glycoprotein N is apparently prevented by the nucleoprotein that may inhibit Gn-stimulated autophagosome-lysosome fusion. Interacts with the viral genomic RNA. In terms of biological role, forms homotetramers with glycoprotein N at the surface of the virion. Attaches the virion to host cell receptors including integrin ITGAV/ITGB3. This attachment induces virion internalization predominantly through clathrin-dependent endocytosis. Class II fusion protein that promotes fusion of viral membrane with host endosomal membrane after endocytosis of the virion. The chain is Envelopment polyprotein (GP) from Sin Nombre orthohantavirus (SNV).